An 836-amino-acid chain; its full sequence is Protein translocase subunit SecA (836 aa).

ATP contacts are provided by residues Gln85, 103-107 (GEGKT), and Asp492. Zn(2+)-binding residues include Cys820, Cys822, Cys831, and Cys832.

The protein belongs to the SecA family. In terms of assembly, monomer and homodimer. Part of the essential Sec protein translocation apparatus which comprises SecA, SecYEG and auxiliary proteins SecDF. Other proteins may also be involved. It depends on Zn(2+) as a cofactor.

It localises to the cell membrane. The protein resides in the cytoplasm. The enzyme catalyses ATP + H2O + cellular proteinSide 1 = ADP + phosphate + cellular proteinSide 2.. Functionally, part of the Sec protein translocase complex. Interacts with the SecYEG preprotein conducting channel. Has a central role in coupling the hydrolysis of ATP to the transfer of proteins into and across the cell membrane, serving as an ATP-driven molecular motor driving the stepwise translocation of polypeptide chains across the membrane. This Clostridium botulinum (strain Alaska E43 / Type E3) protein is Protein translocase subunit SecA.